A 179-amino-acid polypeptide reads, in one-letter code: Adenine phosphoribosyltransferase (179 aa).

The protein belongs to the purine/pyrimidine phosphoribosyltransferase family. As to quaternary structure, homodimer.

It localises to the cytoplasm. It carries out the reaction AMP + diphosphate = 5-phospho-alpha-D-ribose 1-diphosphate + adenine. It participates in purine metabolism; AMP biosynthesis via salvage pathway; AMP from adenine: step 1/1. Functionally, catalyzes a salvage reaction resulting in the formation of AMP, that is energically less costly than de novo synthesis. The polypeptide is Adenine phosphoribosyltransferase (Bradyrhizobium sp. (strain BTAi1 / ATCC BAA-1182)).